The primary structure comprises 261 residues: uncharacterized protein (261 aa).

In terms of domain architecture, HTH tetR-type spans 15–75; sequence SINPEDIISG…AMTDRALSKY (61 aa). Residues 38–57 constitute a DNA-binding region (H-T-H motif); the sequence is SMPLLGKHLGVGVTSIYWYF. The disordered stretch occupies residues 234–261; it reads AAGEVAVRRPTATADAPTPGARAKAVAR. Residues 241-261 show a composition bias toward low complexity; that stretch reads RRPTATADAPTPGARAKAVAR.

This is an uncharacterized protein from Mycobacterium bovis (strain ATCC BAA-935 / AF2122/97).